Here is a 172-residue protein sequence, read N- to C-terminus: MEQLRKRVVRFTNNDDDDFEPVFLNEQDQDAFVEQLRLTNNRDNRMFSIIFSFLYLLLIVPLFLYPEYWAFKLVELLSLFYCAYVMYFLPLEVGLFNPKTPNKWKFLFILNIGVTALITVLGWSQHTSFFYAFLNIRTLVCGITIFTEIARYSMYHSTLSVEKLDEMRFAHM.

Helical transmembrane passes span 46–66 (MFSI…FLYP), 76–96 (LLSL…VGLF), 104–124 (WKFL…LGWS), and 129–149 (FFYA…FTEI).

Its subcellular location is the endoplasmic reticulum membrane. This is an uncharacterized protein from Schizosaccharomyces pombe (strain 972 / ATCC 24843) (Fission yeast).